Here is a 519-residue protein sequence, read N- to C-terminus: ATP synthase subunit alpha (519 aa).

Residue 174–181 (GDRQTGKT) coordinates ATP.

The protein belongs to the ATPase alpha/beta chains family. In terms of assembly, F-type ATPases have 2 components, CF(1) - the catalytic core - and CF(0) - the membrane proton channel. CF(1) has five subunits: alpha(3), beta(3), gamma(1), delta(1), epsilon(1). CF(0) has three main subunits: a(1), b(2) and c(9-12). The alpha and beta chains form an alternating ring which encloses part of the gamma chain. CF(1) is attached to CF(0) by a central stalk formed by the gamma and epsilon chains, while a peripheral stalk is formed by the delta and b chains.

It localises to the cell inner membrane. The enzyme catalyses ATP + H2O + 4 H(+)(in) = ADP + phosphate + 5 H(+)(out). Its function is as follows. Produces ATP from ADP in the presence of a proton gradient across the membrane. The alpha chain is a regulatory subunit. The chain is ATP synthase subunit alpha from Acidovorax ebreus (strain TPSY) (Diaphorobacter sp. (strain TPSY)).